The sequence spans 827 residues: Periplasmic nitrate reductase (827 aa).

A signal peptide (tat-type signal) is located at residues M1–A32. Positions I37–D93 constitute a 4Fe-4S Mo/W bis-MGD-type domain. [4Fe-4S] cluster contacts are provided by C44, C47, C51, and C79. Mo-bis(molybdopterin guanine dinucleotide) is bound by residues K81, Q148, N173, C177, W210–M217, S241–H245, M371, Q375, N481, S507–D508, K530, D557, and T717–T726. F793 contacts substrate. The Mo-bis(molybdopterin guanine dinucleotide) site is built by N801 and K818.

This sequence belongs to the prokaryotic molybdopterin-containing oxidoreductase family. NasA/NapA/NarB subfamily. In terms of assembly, component of the periplasmic nitrate reductase NapAB complex composed of NapA and NapB. [4Fe-4S] cluster is required as a cofactor. It depends on Mo-bis(molybdopterin guanine dinucleotide) as a cofactor. In terms of processing, predicted to be exported by the Tat system. The position of the signal peptide cleavage has not been experimentally proven.

The protein resides in the periplasm. The catalysed reaction is 2 Fe(II)-[cytochrome] + nitrate + 2 H(+) = 2 Fe(III)-[cytochrome] + nitrite + H2O. Catalytic subunit of the periplasmic nitrate reductase complex NapAB. Receives electrons from NapB and catalyzes the reduction of nitrate to nitrite. In Haemophilus ducreyi (strain 35000HP / ATCC 700724), this protein is Periplasmic nitrate reductase.